A 399-amino-acid chain; its full sequence is RNA-binding protein cabeza (399 aa).

Over residues 1–12 the composition is skewed to gly residues; it reads MERGGYGGGSGQ. The interval 1–82 is disordered; that stretch reads MERGGYGGGS…RGGNSYGNGG (82 aa). The segment covering 24 to 34 has biased composition (polar residues); sequence YQQMPNKTGNY. The span at 43-69 shows a compositional bias: gly residues; that stretch reads KQGGGYDSGSGHRGSGGSGNGGGGGGS. An RRM domain is found at 120–206; that stretch reads DTIFVSGMDP…NAIKVSLAQR (87 aa). Disordered stretches follow at residues 209-276 and 300-399; these read NWNK…QPRD and TPKG…SRPY. Positions 212-271 are enriched in gly residues; the sequence is KGGGGGGGGGGRGGFGGRRGGGGGGGGGGGGGGRFDRGGGGGGGRYDRGGGGGGGGGGGN. The segment at 275–304 adopts a RanBP2-type zinc-finger fold; it reads RDGDWKCNSCNNTNFAWRNECNRCKTPKGD. Gly residues-rich tracts occupy residues 308–339, 347–361, and 368–380; these read SSGGGGGGGYGGGGGGGGYDRGNDRGSGGGGY, NSQGGGGGGGGGGGY, and NGGGRGGRGGGGG. The segment covering 387–399 has biased composition (low complexity); that stretch reads PMRNDGGMRSRPY.

This sequence belongs to the RRM TET family. In terms of tissue distribution, ubiquitous. Enriched in the brain and central nervous system during embryogenesis. Enriched in the adult head. Embryos contain both isoforms A and B, whereas later in development (heads and torsos) only isoform B is detected.

It is found in the nucleus. Its function is as follows. May participate in a function common to the expression of most genes transcribed by RNA polymerase II. The chain is RNA-binding protein cabeza (caz) from Drosophila melanogaster (Fruit fly).